Consider the following 440-residue polypeptide: Ribosomal protein uS12 methylthiotransferase RimO (440 aa).

Positions 5–116 (PTIAISHLGC…IVSVIERAEQ (112 aa)) constitute an MTTase N-terminal domain. [4Fe-4S] cluster is bound by residues Cys14, Cys50, Cys79, Cys154, Cys158, and Cys161. The 231-residue stretch at 140–370 (TTTEGVAYLR…ALQQPISWRK (231 aa)) folds into the Radical SAM core domain. A TRAM domain is found at 372-438 (QQEVGKTVEV…EYDLFGQVVS (67 aa)).

The protein belongs to the methylthiotransferase family. RimO subfamily. It depends on [4Fe-4S] cluster as a cofactor.

The protein resides in the cytoplasm. It carries out the reaction L-aspartate(89)-[ribosomal protein uS12]-hydrogen + (sulfur carrier)-SH + AH2 + 2 S-adenosyl-L-methionine = 3-methylsulfanyl-L-aspartate(89)-[ribosomal protein uS12]-hydrogen + (sulfur carrier)-H + 5'-deoxyadenosine + L-methionine + A + S-adenosyl-L-homocysteine + 2 H(+). Its function is as follows. Catalyzes the methylthiolation of an aspartic acid residue of ribosomal protein uS12. In Nostoc sp. (strain PCC 7120 / SAG 25.82 / UTEX 2576), this protein is Ribosomal protein uS12 methylthiotransferase RimO.